Consider the following 341-residue polypeptide: Phosphate acyltransferase (341 aa).

The protein belongs to the PlsX family. In terms of assembly, homodimer. Probably interacts with PlsY.

Its subcellular location is the cytoplasm. It catalyses the reaction a fatty acyl-[ACP] + phosphate = an acyl phosphate + holo-[ACP]. Its pathway is lipid metabolism; phospholipid metabolism. In terms of biological role, catalyzes the reversible formation of acyl-phosphate (acyl-PO(4)) from acyl-[acyl-carrier-protein] (acyl-ACP). This enzyme utilizes acyl-ACP as fatty acyl donor, but not acyl-CoA. This is Phosphate acyltransferase from Ehrlichia ruminantium (strain Gardel).